Consider the following 395-residue polypeptide: Pyridinium-3,5-bisthiocarboxylic acid mononucleotide nickel insertion protein (395 aa).

The protein belongs to the LarC family.

It catalyses the reaction Ni(II)-pyridinium-3,5-bisthiocarboxylate mononucleotide = pyridinium-3,5-bisthiocarboxylate mononucleotide + Ni(2+). In terms of biological role, involved in the biosynthesis of a nickel-pincer cofactor ((SCS)Ni(II) pincer complex). Binds Ni(2+), and functions in nickel delivery to pyridinium-3,5-bisthiocarboxylic acid mononucleotide (P2TMN), to form the mature cofactor. Is thus probably required for the activation of nickel-pincer cofactor-dependent enzymes. This chain is Pyridinium-3,5-bisthiocarboxylic acid mononucleotide nickel insertion protein, found in Staphylococcus epidermidis (strain ATCC 35984 / DSM 28319 / BCRC 17069 / CCUG 31568 / BM 3577 / RP62A).